Here is a 447-residue protein sequence, read N- to C-terminus: ATP-dependent protease ATPase subunit HslU (447 aa).

ATP-binding positions include Ile17 and 59 to 64 (GVGKTE). Positions 136-160 (PPARGGFQGEPTAEEKPTEKKESAT) are disordered. Positions 148–159 (AEEKPTEKKESA) are enriched in basic and acidic residues. ATP contacts are provided by Asp260, Glu325, and Arg397.

The protein belongs to the ClpX chaperone family. HslU subfamily. As to quaternary structure, a double ring-shaped homohexamer of HslV is capped on each side by a ring-shaped HslU homohexamer. The assembly of the HslU/HslV complex is dependent on binding of ATP.

It is found in the cytoplasm. Its function is as follows. ATPase subunit of a proteasome-like degradation complex; this subunit has chaperone activity. The binding of ATP and its subsequent hydrolysis by HslU are essential for unfolding of protein substrates subsequently hydrolyzed by HslV. HslU recognizes the N-terminal part of its protein substrates and unfolds these before they are guided to HslV for hydrolysis. The sequence is that of ATP-dependent protease ATPase subunit HslU from Coxiella burnetii (strain RSA 331 / Henzerling II).